A 103-amino-acid chain; its full sequence is Acylphosphatase-2 (103 aa).

Residue serine 2 is modified to N-acetylserine. The Acylphosphatase-like domain maps to 13-103 (SVDYEVFGRV…LDFSGFSTRY (91 aa)). Active-site residues include arginine 28 and asparagine 46.

It belongs to the acylphosphatase family.

The enzyme catalyses an acyl phosphate + H2O = a carboxylate + phosphate + H(+). Its physiological role is not yet clear. The polypeptide is Acylphosphatase-2 (ACYP2) (Gallus gallus (Chicken)).